A 587-amino-acid polypeptide reads, in one-letter code: D-lactate dehydrogenase [cytochrome] 1, mitochondrial (587 aa).

Positions 146 to 327 constitute an FAD-binding PCMH-type domain; the sequence is SPEQRPRIIL…TEATVKCHVK (182 aa).

The protein belongs to the FAD-binding oxidoreductase/transferase type 4 family. It depends on FAD as a cofactor.

It is found in the mitochondrion inner membrane. It carries out the reaction (R)-lactate + 2 Fe(III)-[cytochrome c] = 2 Fe(II)-[cytochrome c] + pyruvate + 2 H(+). In terms of biological role, catalyzes the stereospecific oxidation of D-lactate to pyruvate. This Saccharomyces cerevisiae (strain ATCC 204508 / S288c) (Baker's yeast) protein is D-lactate dehydrogenase [cytochrome] 1, mitochondrial.